Reading from the N-terminus, the 298-residue chain is Probable endonuclease 4 (298 aa).

9 residues coordinate Zn(2+): histidine 69, histidine 111, glutamate 146, aspartate 180, histidine 183, histidine 215, aspartate 228, histidine 230, and glutamate 260.

It belongs to the AP endonuclease 2 family. The cofactor is Zn(2+).

The catalysed reaction is Endonucleolytic cleavage to 5'-phosphooligonucleotide end-products.. Functionally, endonuclease IV plays a role in DNA repair. It cleaves phosphodiester bonds at apurinic or apyrimidinic (AP) sites, generating a 3'-hydroxyl group and a 5'-terminal sugar phosphate. The protein is Probable endonuclease 4 of Bacillus mycoides (strain KBAB4) (Bacillus weihenstephanensis).